The sequence spans 450 residues: Tubulin alpha-2 chain (450 aa).

A GTP-binding site is contributed by glutamine 11. Lysine 40 is modified (N6-acetyllysine). 6 residues coordinate GTP: glutamate 71, glycine 144, threonine 145, threonine 179, asparagine 206, and asparagine 228. Glutamate 71 serves as a coordination point for Mg(2+). Glutamate 254 is a catalytic residue.

This sequence belongs to the tubulin family. Dimer of alpha and beta chains. A typical microtubule is a hollow water-filled tube with an outer diameter of 25 nm and an inner diameter of 15 nM. Alpha-beta heterodimers associate head-to-tail to form protofilaments running lengthwise along the microtubule wall with the beta-tubulin subunit facing the microtubule plus end conferring a structural polarity. Microtubules usually have 13 protofilaments but different protofilament numbers can be found in some organisms and specialized cells. Mg(2+) serves as cofactor. In terms of processing, undergoes a tyrosination/detyrosination cycle, the cyclic removal and re-addition of a C-terminal tyrosine residue by the enzymes tubulin tyrosine carboxypeptidase (TTCP) and tubulin tyrosine ligase (TTL), respectively. Acetylation of alpha chains at Lys-40 stabilizes microtubules and affects affinity and processivity of microtubule motors. This modification has a role in multiple cellular functions, ranging from cell motility, cell cycle progression or cell differentiation to intracellular trafficking and signaling.

The protein localises to the cytoplasm. Its subcellular location is the cytoskeleton. The enzyme catalyses GTP + H2O = GDP + phosphate + H(+). In terms of biological role, tubulin is the major constituent of microtubules, a cylinder consisting of laterally associated linear protofilaments composed of alpha- and beta-tubulin heterodimers. Microtubules grow by the addition of GTP-tubulin dimers to the microtubule end, where a stabilizing cap forms. Below the cap, tubulin dimers are in GDP-bound state, owing to GTPase activity of alpha-tubulin. The polypeptide is Tubulin alpha-2 chain (Gossypium hirsutum (Upland cotton)).